The following is a 519-amino-acid chain: Galactokinase (519 aa).

Positions 47, 53, 54, and 56 each coordinate alpha-D-galactose. ATP contacts are provided by Gly159, Gly161, Ser163, and Ser164. Asp209 lines the alpha-D-galactose pocket. Asp209 serves as the catalytic Proton acceptor. Residues Asn257 and Lys258 each contribute to the ATP site. Alpha-D-galactose is bound at residue Tyr266.

This sequence belongs to the GHMP kinase family. GalK subfamily.

It catalyses the reaction alpha-D-galactose + ATP = alpha-D-galactose 1-phosphate + ADP + H(+). The protein operates within carbohydrate metabolism; galactose metabolism. Its function is as follows. Galactokinase is a key enzyme in the galactose metabolism where it catalyzes the conversion of alpha-D-galactose to galactose 1-phosphate. Can also induce the transcription of the gal genes in response to the organism being challenged with galactose as the sole source of carbon. The protein is Galactokinase (gal1) of Schizosaccharomyces pombe (strain 972 / ATCC 24843) (Fission yeast).